Reading from the N-terminus, the 720-residue chain is Heat shock protein homolog pss1 (720 aa).

The residue at position 38 (Ser38) is a Phosphoserine. Phosphothreonine is present on Thr39. Residues 658-690 (KRQKVQAEREAAKAATKSEAEKQKPSGKFEEGT) are compositionally biased toward basic and acidic residues. Positions 658 to 720 (KRQKVQAERE…ETMEIDEQKE (63 aa)) are disordered. Residues 703 to 720 (VAPENEEVETMEIDEQKE) show a composition bias toward acidic residues.

This sequence belongs to the heat shock protein 70 family.

The protein resides in the cytoplasm. Its function is as follows. Required for normal growth at various temperatures. In Schizosaccharomyces pombe (strain 972 / ATCC 24843) (Fission yeast), this protein is Heat shock protein homolog pss1 (pss1).